A 106-amino-acid polypeptide reads, in one-letter code: uncharacterized protein (106 aa).

This is an uncharacterized protein from Schizosaccharomyces pombe (strain 972 / ATCC 24843) (Fission yeast).